A 515-amino-acid polypeptide reads, in one-letter code: Membrane-bound lytic murein transglycosylase F (515 aa).

The first 32 residues, 1 to 32 (MKKLKINYLFIGILTLLLAAALWPSIPWFGKA), serve as a signal peptide directing secretion. The non-LT domain stretch occupies residues 33–269 (DNRIAAIQSR…RMEEKYLGHG (237 aa)). An LT domain region spans residues 270 to 515 (DDFDYVDTRT…PFSLKKKDEN (246 aa)). Residue Glu-314 is part of the active site. A disordered region spans residues 493–515 (QPSSNYLSHSPSLPFSLKKKDEN).

It in the N-terminal section; belongs to the bacterial solute-binding protein 3 family. This sequence in the C-terminal section; belongs to the transglycosylase Slt family.

Its subcellular location is the cell outer membrane. It carries out the reaction Exolytic cleavage of the (1-&gt;4)-beta-glycosidic linkage between N-acetylmuramic acid (MurNAc) and N-acetylglucosamine (GlcNAc) residues in peptidoglycan, from either the reducing or the non-reducing ends of the peptidoglycan chains, with concomitant formation of a 1,6-anhydrobond in the MurNAc residue.. In terms of biological role, murein-degrading enzyme that degrades murein glycan strands and insoluble, high-molecular weight murein sacculi, with the concomitant formation of a 1,6-anhydromuramoyl product. Lytic transglycosylases (LTs) play an integral role in the metabolism of the peptidoglycan (PG) sacculus. Their lytic action creates space within the PG sacculus to allow for its expansion as well as for the insertion of various structures such as secretion systems and flagella. This is Membrane-bound lytic murein transglycosylase F from Citrobacter koseri (strain ATCC BAA-895 / CDC 4225-83 / SGSC4696).